We begin with the raw amino-acid sequence, 257 residues long: ATP synthase subunit a (257 aa).

A propeptide spans 1-8 (MRHLDFVL) (removed in mature form). Transmembrane regions (helical) follow at residues 34–54 (LTNIGLYLTISIFLILTYSLL), 93–113 (FFPLMYVLFIFILVNNLIGLV), 122–142 (HFILTFSISFTVVLGATILGF), 149–169 (FFSLFVPSGCPLALLPLLVLI), 187–207 (ANILSGHMLLSILSGFTYNIM), 210–230 (GIIFFILGLIPLAFIIAFSGL), and 231–251 (ELAIAFIQAQVFVVLACSYIK).

This sequence belongs to the ATPase A chain family. As to quaternary structure, F-type ATPases have 2 components, CF(1) - the catalytic core - and CF(0) - the membrane proton channel. CF(1) has five subunits: alpha(3), beta(3), gamma(1), delta(1), epsilon(1). CF(0) has three main subunits: a, b and c.

Its subcellular location is the mitochondrion inner membrane. Functionally, mitochondrial membrane ATP synthase (F(1)F(0) ATP synthase or Complex V) produces ATP from ADP in the presence of a proton gradient across the membrane which is generated by electron transport complexes of the respiratory chain. F-type ATPases consist of two structural domains, F(1) - containing the extramembraneous catalytic core and F(0) - containing the membrane proton channel, linked together by a central stalk and a peripheral stalk. During catalysis, ATP synthesis in the catalytic domain of F(1) is coupled via a rotary mechanism of the central stalk subunits to proton translocation. Key component of the proton channel; it may play a direct role in the translocation of protons across the membrane. The sequence is that of ATP synthase subunit a (atp6) from Penicillium chrysogenum (Penicillium notatum).